A 359-amino-acid chain; its full sequence is DNA polymerase IV (359 aa).

One can recognise a UmuC domain in the interval 4–184 (IVHVDMDAFY…LKVNRIPGVG (181 aa)). Mg(2+) is bound by residues Asp8 and Asp102. Glu103 is an active-site residue.

It belongs to the DNA polymerase type-Y family. Monomer. Mg(2+) is required as a cofactor.

Its subcellular location is the cytoplasm. It carries out the reaction DNA(n) + a 2'-deoxyribonucleoside 5'-triphosphate = DNA(n+1) + diphosphate. Functionally, poorly processive, error-prone DNA polymerase involved in untargeted mutagenesis. Copies undamaged DNA at stalled replication forks, which arise in vivo from mismatched or misaligned primer ends. These misaligned primers can be extended by PolIV. Exhibits no 3'-5' exonuclease (proofreading) activity. May be involved in translesional synthesis, in conjunction with the beta clamp from PolIII. The protein is DNA polymerase IV of Xanthomonas axonopodis pv. citri (strain 306).